The primary structure comprises 330 residues: Serine/threonine-protein phosphatase beta isoform (330 aa).

Mn(2+) is bound by residues Asp-63, His-65, Asp-91, and Asn-123. His-124 acts as the Proton donor in catalysis. His-172 and His-247 together coordinate Mn(2+). Residues 308–319 show a composition bias toward polar residues; the sequence is GMNSSRPTTPQR. The tract at residues 308 to 330 is disordered; that stretch reads GMNSSRPTTPQRSAPMLATNKKK. Phosphothreonine is present on residues Thr-315 and Thr-316.

The protein belongs to the PPP phosphatase family. PP-1 subfamily. Interacts with Nop17l. Interacts with uri; uri inhibits flw phosphatase activity. The cofactor is Mn(2+).

The catalysed reaction is O-phospho-L-seryl-[protein] + H2O = L-seryl-[protein] + phosphate. It carries out the reaction O-phospho-L-threonyl-[protein] + H2O = L-threonyl-[protein] + phosphate. Its function is as follows. Required for cell adhesion in non-muscle tissues and in maintenance of muscle attachment. Vital for larval development. This Drosophila melanogaster (Fruit fly) protein is Serine/threonine-protein phosphatase beta isoform (flw).